Here is a 611-residue protein sequence, read N- to C-terminus: Elongation factor 4 1 (611 aa).

The 183-residue stretch at Q11–Q193 folds into the tr-type G domain. GTP-binding positions include D23–T28 and N140–D143.

The protein belongs to the TRAFAC class translation factor GTPase superfamily. Classic translation factor GTPase family. LepA subfamily.

It is found in the cell membrane. It catalyses the reaction GTP + H2O = GDP + phosphate + H(+). Functionally, required for accurate and efficient protein synthesis under certain stress conditions. May act as a fidelity factor of the translation reaction, by catalyzing a one-codon backward translocation of tRNAs on improperly translocated ribosomes. Back-translocation proceeds from a post-translocation (POST) complex to a pre-translocation (PRE) complex, thus giving elongation factor G a second chance to translocate the tRNAs correctly. Binds to ribosomes in a GTP-dependent manner. This Lactiplantibacillus plantarum (strain ATCC BAA-793 / NCIMB 8826 / WCFS1) (Lactobacillus plantarum) protein is Elongation factor 4 1.